The chain runs to 249 residues: tRNA pseudouridine synthase A (249 aa).

The Nucleophile role is filled by D53. Y111 contributes to the substrate binding site.

It belongs to the tRNA pseudouridine synthase TruA family. Homodimer.

It carries out the reaction uridine(38/39/40) in tRNA = pseudouridine(38/39/40) in tRNA. Functionally, formation of pseudouridine at positions 38, 39 and 40 in the anticodon stem and loop of transfer RNAs. This chain is tRNA pseudouridine synthase A, found in Streptococcus suis (strain 98HAH33).